The sequence spans 1362 residues: DNA-directed RNA polymerase subunit beta (1362 aa).

This sequence belongs to the RNA polymerase beta chain family. In terms of assembly, the RNAP catalytic core consists of 2 alpha, 1 beta, 1 beta' and 1 omega subunit. When a sigma factor is associated with the core the holoenzyme is formed, which can initiate transcription.

It catalyses the reaction RNA(n) + a ribonucleoside 5'-triphosphate = RNA(n+1) + diphosphate. In terms of biological role, DNA-dependent RNA polymerase catalyzes the transcription of DNA into RNA using the four ribonucleoside triphosphates as substrates. In Acinetobacter baylyi (strain ATCC 33305 / BD413 / ADP1), this protein is DNA-directed RNA polymerase subunit beta.